The chain runs to 54 residues: Large ribosomal subunit protein bL32c (54 aa).

This sequence belongs to the bacterial ribosomal protein bL32 family.

Its subcellular location is the plastid. The protein resides in the chloroplast. This is Large ribosomal subunit protein bL32c from Panax ginseng (Korean ginseng).